Reading from the N-terminus, the 98-residue chain is NADH-ubiquinone oxidoreductase chain 4L (98 aa).

The next 3 membrane-spanning stretches (helical) occupy residues 2-22 (PSIS…MLIF), 29-49 (SLLC…LTIL), and 61-81 (ILLL…LVTV).

It belongs to the complex I subunit 4L family. In terms of assembly, core subunit of respiratory chain NADH dehydrogenase (Complex I) which is composed of 45 different subunits.

The protein resides in the mitochondrion inner membrane. It carries out the reaction a ubiquinone + NADH + 5 H(+)(in) = a ubiquinol + NAD(+) + 4 H(+)(out). Core subunit of the mitochondrial membrane respiratory chain NADH dehydrogenase (Complex I) which catalyzes electron transfer from NADH through the respiratory chain, using ubiquinone as an electron acceptor. Part of the enzyme membrane arm which is embedded in the lipid bilayer and involved in proton translocation. This Eulemur rubriventer (Red-bellied lemur) protein is NADH-ubiquinone oxidoreductase chain 4L (MT-ND4L).